Here is a 105-residue protein sequence, read N- to C-terminus: Replication restart protein PriB (105 aa).

An SSB domain is found at 1–102; the sequence is MTANRLVLTG…LHAEQIELID (102 aa).

It belongs to the PriB family. As to quaternary structure, homodimer. Interacts with PriA and DnaT. Component of the replication restart primosome. Primosome assembly occurs via a 'hand-off' mechanism. PriA binds to replication forks, subsequently PriB then DnaT bind; DnaT then displaces ssDNA to generate the helicase loading substrate.

Functionally, involved in the restart of stalled replication forks, which reloads the replicative helicase on sites other than the origin of replication; the PriA-PriB pathway is the major replication restart pathway. During primosome assembly it facilitates complex formation between PriA and DnaT on DNA; stabilizes PriA on DNA. Stimulates the DNA unwinding activity of PriA helicase. The sequence is that of Replication restart protein PriB from Proteus mirabilis (strain HI4320).